A 235-amino-acid chain; its full sequence is Uridylate kinase (235 aa).

An ATP-binding site is contributed by 8 to 11; that stretch reads KLSG. Position 49 (G49) interacts with UMP. 2 residues coordinate ATP: G50 and R54. 131–138 contributes to the UMP binding site; the sequence is TGNPYFST. 3 residues coordinate ATP: N159, Y165, and D168.

Belongs to the UMP kinase family. In terms of assembly, homohexamer.

It localises to the cytoplasm. The enzyme catalyses UMP + ATP = UDP + ADP. Its pathway is pyrimidine metabolism; CTP biosynthesis via de novo pathway; UDP from UMP (UMPK route): step 1/1. Inhibited by UTP. Catalyzes the reversible phosphorylation of UMP to UDP. The chain is Uridylate kinase from Mycoplasma pneumoniae (strain ATCC 29342 / M129 / Subtype 1) (Mycoplasmoides pneumoniae).